Reading from the N-terminus, the 168-residue chain is Protein archease (168 aa).

At alanine 2 the chain carries N-acetylalanine. The Ca(2+) site is built by aspartate 39, aspartate 167, and isoleucine 168.

Belongs to the archease family. As to quaternary structure, component of the tRNA-splicing ligase complex.

Functionally, component of the tRNA-splicing ligase complex required to facilitate the enzymatic turnover of catalytic subunit RTCB. Together with DDX1, acts by facilitating the guanylylation of RTCB, a key intermediate step in tRNA ligation. The polypeptide is Protein archease (Zbtb8os) (Mus musculus (Mouse)).